The primary structure comprises 359 residues: Small ribosomal subunit protein uS2 (359 aa).

The disordered stretch occupies residues Glu-232–Thr-295. Basic and acidic residues-rich tracts occupy residues Glu-239 to Asn-250 and Asp-257 to Tyr-273.

Belongs to the universal ribosomal protein uS2 family.

This chain is Small ribosomal subunit protein uS2 (rpsB), found in Spiroplasma citri.